We begin with the raw amino-acid sequence, 330 residues long: Ribosomal RNA large subunit methyltransferase F (330 aa).

Belongs to the methyltransferase superfamily. METTL16/RlmF family.

The protein resides in the cytoplasm. The catalysed reaction is adenosine(1618) in 23S rRNA + S-adenosyl-L-methionine = N(6)-methyladenosine(1618) in 23S rRNA + S-adenosyl-L-homocysteine + H(+). Its function is as follows. Specifically methylates the adenine in position 1618 of 23S rRNA. The chain is Ribosomal RNA large subunit methyltransferase F from Pseudoalteromonas atlantica (strain T6c / ATCC BAA-1087).